Consider the following 152-residue polypeptide: D-aminoacyl-tRNA deacylase (152 aa).

The Gly-cisPro motif, important for rejection of L-amino acids signature appears at 142–143; it reads GP.

It belongs to the DTD family. In terms of assembly, homodimer.

It localises to the cytoplasm. It carries out the reaction glycyl-tRNA(Ala) + H2O = tRNA(Ala) + glycine + H(+). The enzyme catalyses a D-aminoacyl-tRNA + H2O = a tRNA + a D-alpha-amino acid + H(+). An aminoacyl-tRNA editing enzyme that deacylates mischarged D-aminoacyl-tRNAs. Also deacylates mischarged glycyl-tRNA(Ala), protecting cells against glycine mischarging by AlaRS. Acts via tRNA-based rather than protein-based catalysis; rejects L-amino acids rather than detecting D-amino acids in the active site. By recycling D-aminoacyl-tRNA to D-amino acids and free tRNA molecules, this enzyme counteracts the toxicity associated with the formation of D-aminoacyl-tRNA entities in vivo and helps enforce protein L-homochirality. The sequence is that of D-aminoacyl-tRNA deacylase from Burkholderia mallei (strain NCTC 10247).